The following is a 545-amino-acid chain: CTP synthase (545 aa).

The amidoligase domain stretch occupies residues 1–266 (MATNYIFVTG…DDFVCERFRL (266 aa)). A CTP-binding site is contributed by Ser14. UTP is bound at residue Ser14. Residues 15 to 20 (SLGKGI) and Asp72 each bind ATP. Mg(2+) contacts are provided by Asp72 and Glu140. CTP is bound by residues 147–149 (DIE), 187–192 (KTKPTQ), and Lys223. Residues 187–192 (KTKPTQ) and Lys223 contribute to the UTP site. Position 239 to 241 (239 to 241 (KDV)) interacts with ATP. A Glutamine amidotransferase type-1 domain is found at 291 to 542 (TIGMVGKYTE…VKAAYENHKK (252 aa)). Gly352 is an L-glutamine binding site. The active-site Nucleophile; for glutamine hydrolysis is the Cys379. L-glutamine is bound by residues 380-383 (LGMQ), Glu403, and Arg470. Residues His515 and Glu517 contribute to the active site.

The protein belongs to the CTP synthase family. In terms of assembly, homotetramer.

The catalysed reaction is UTP + L-glutamine + ATP + H2O = CTP + L-glutamate + ADP + phosphate + 2 H(+). It carries out the reaction L-glutamine + H2O = L-glutamate + NH4(+). The enzyme catalyses UTP + NH4(+) + ATP = CTP + ADP + phosphate + 2 H(+). It participates in pyrimidine metabolism; CTP biosynthesis via de novo pathway; CTP from UDP: step 2/2. With respect to regulation, allosterically activated by GTP, when glutamine is the substrate; GTP has no effect on the reaction when ammonia is the substrate. The allosteric effector GTP functions by stabilizing the protein conformation that binds the tetrahedral intermediate(s) formed during glutamine hydrolysis. Inhibited by the product CTP, via allosteric rather than competitive inhibition. In terms of biological role, catalyzes the ATP-dependent amination of UTP to CTP with either L-glutamine or ammonia as the source of nitrogen. Regulates intracellular CTP levels through interactions with the four ribonucleotide triphosphates. The polypeptide is CTP synthase (Haemophilus influenzae (strain PittEE)).